The primary structure comprises 236 residues: Ubiquinone biosynthesis O-methyltransferase (236 aa).

4 residues coordinate S-adenosyl-L-methionine: R40, G59, D80, and L124.

It belongs to the methyltransferase superfamily. UbiG/COQ3 family.

The enzyme catalyses a 3-demethylubiquinol + S-adenosyl-L-methionine = a ubiquinol + S-adenosyl-L-homocysteine + H(+). It catalyses the reaction a 3-(all-trans-polyprenyl)benzene-1,2-diol + S-adenosyl-L-methionine = a 2-methoxy-6-(all-trans-polyprenyl)phenol + S-adenosyl-L-homocysteine + H(+). It functions in the pathway cofactor biosynthesis; ubiquinone biosynthesis. O-methyltransferase that catalyzes the 2 O-methylation steps in the ubiquinone biosynthetic pathway. The protein is Ubiquinone biosynthesis O-methyltransferase of Saccharophagus degradans (strain 2-40 / ATCC 43961 / DSM 17024).